Here is a 200-residue protein sequence, read N- to C-terminus: MMEEELLIPEDEYQKSGIHIGTQIKSKDMDPYIFKIRNDGLYILDIRKTNHALIIAGKMLARYRPEQILAVAQRQYAFRPVSKFSEVVGSKSIIGRFIPGTLTNPALPNYSEAKIILVTDPLADTQAMKEAIKVGIPIIAMCDANNKTDFVDLIIPTNNKGRRSLAVIYWLLAREILKNRGDIKSYDEFKQTIDDFEVQI.

The protein belongs to the universal ribosomal protein uS2 family.

In Picrophilus torridus (strain ATCC 700027 / DSM 9790 / JCM 10055 / NBRC 100828 / KAW 2/3), this protein is Small ribosomal subunit protein uS2.